A 159-amino-acid polypeptide reads, in one-letter code: Large ribosomal subunit protein uL10 (159 aa).

The protein belongs to the universal ribosomal protein uL10 family. Part of the ribosomal stalk of the 50S ribosomal subunit. The N-terminus interacts with L11 and the large rRNA to form the base of the stalk. The C-terminus forms an elongated spine to which L12 dimers bind in a sequential fashion forming a multimeric L10(L12)X complex.

Its function is as follows. Forms part of the ribosomal stalk, playing a central role in the interaction of the ribosome with GTP-bound translation factors. The protein is Large ribosomal subunit protein uL10 (rplJ) of Campylobacter jejuni subsp. jejuni serotype O:2 (strain ATCC 700819 / NCTC 11168).